Here is a 157-residue protein sequence, read N- to C-terminus: Large ribosomal subunit protein bL34c (157 aa).

The N-terminal 97 residues, 1-97 (MASLSTSVVA…GQRRRGLVVR (97 aa)), are a transit peptide targeting the chloroplast.

Belongs to the bacterial ribosomal protein bL34 family. Part of the 50S ribosomal subunit.

The protein localises to the plastid. It localises to the chloroplast. Its function is as follows. This protein binds directly to 23S ribosomal RNA. The chain is Large ribosomal subunit protein bL34c (RPL34) from Arabidopsis thaliana (Mouse-ear cress).